Consider the following 504-residue polypeptide: Glycerol kinase (504 aa).

An ADP-binding site is contributed by threonine 14. Residues threonine 14, threonine 15, and serine 16 each coordinate ATP. Threonine 14 contributes to the sn-glycerol 3-phosphate binding site. Position 18 (arginine 18) interacts with ADP. Residues arginine 84, glutamate 85, tyrosine 136, and aspartate 246 each coordinate sn-glycerol 3-phosphate. 5 residues coordinate glycerol: arginine 84, glutamate 85, tyrosine 136, aspartate 246, and glutamine 247. Threonine 268 and glycine 311 together coordinate ADP. ATP is bound by residues threonine 268, glycine 311, glutamine 315, and glycine 412. The ADP site is built by glycine 412 and asparagine 416.

Belongs to the FGGY kinase family.

The catalysed reaction is glycerol + ATP = sn-glycerol 3-phosphate + ADP + H(+). The protein operates within polyol metabolism; glycerol degradation via glycerol kinase pathway; sn-glycerol 3-phosphate from glycerol: step 1/1. Inhibited by fructose 1,6-bisphosphate (FBP). Its function is as follows. Key enzyme in the regulation of glycerol uptake and metabolism. Catalyzes the phosphorylation of glycerol to yield sn-glycerol 3-phosphate. The polypeptide is Glycerol kinase (Aliivibrio fischeri (strain MJ11) (Vibrio fischeri)).